A 180-amino-acid chain; its full sequence is MLKLLSEIGPVIAFFAGFFYGGGIQNATLYMLITAIICVTICYFVDKKVSKLSIISVSVLLVSGIITLISGNSIYIKIKPTILYVIFGIIFLMSGIRKNPFIKYALESIVRLKEESWITLSYRAAAFFFFMAVVNEIVWRNFSDETWVKFKVFGVIPITFIFILLQLPLLLKNKLPDSKI.

Helical transmembrane passes span 25 to 45, 54 to 74, 76 to 96, 118 to 138, and 150 to 170; these read QNAT…CYFV, IISV…GNSI, IKIK…MSGI, ITLS…NEIV, and FKVF…LPLL.

Belongs to the YciB family.

The protein localises to the cell inner membrane. Its function is as follows. Plays a role in cell envelope biogenesis, maintenance of cell envelope integrity and membrane homeostasis. In Rickettsia canadensis (strain McKiel), this protein is Inner membrane-spanning protein YciB.